The following is a 300-amino-acid chain: Regulatory protein NocR (300 aa).

Residues 1–59 (MIQSRQLEAFRPVMLTGGMTSAANLVRITQPAISRLIRDLEEEIGISLFERTGNRLRPT) form the HTH lysR-type domain. A DNA-binding region (H-T-H motif) is located at residues 19-38 (MTSAANLVRITQPAISRLIR).

This sequence belongs to the LysR transcriptional regulatory family.

In terms of biological role, positive regulatory protein for the noc operon involved in nopaline catabolism and uptake. The chain is Regulatory protein NocR (nocR) from Agrobacterium tumefaciens (strain T37).